The chain runs to 209 residues: Transcription factor 23 (209 aa).

2 disordered regions span residues 1–20 (MSQE…GHNK) and 54–85 (LSRA…ARER). Positions 72–85 (GRSEASPENAARER) are enriched in basic and acidic residues. One can recognise a bHLH domain in the interval 75–127 (EASPENAARERTRVKTLRQAFLALQAALPAVPPDTKLSKLDVLVLATSYIAHL).

As to quaternary structure, forms inactive heterodimeric complex with TCF3. In terms of tissue distribution, highly expressed in the uterus (predominantly in myometrium), ovary, and testis. Expression in the uterus is higher in the diestrus phase than in the estrus phase and reaches a maximum at 7.5 dpc. Expression declines towards the time of delivery and returns to the non-pregnant level 4 days after delivery. Low expression seen in lung, heart, intestine, and spleen.

The protein resides in the nucleus. Functionally, inhibits E-box-mediated binding and transactivation of bHLH factors. Inhibitory effect is similar to that of ID proteins. Inhibits the formation of TCF3 and MYOD1 homodimers and heterodimers. Lacks DNA binding activity. May be involved in the regulation or modulation of smooth muscle contraction of the uterus during pregnancy and particularly around the time of delivery. Seems to play a role in the inhibition of myogenesis. The chain is Transcription factor 23 (Tcf23) from Mus musculus (Mouse).